We begin with the raw amino-acid sequence, 396 residues long: Elongation factor Tu (396 aa).

Residues 10-206 (KPHVNVGTIG…ALDSYIPTPE (197 aa)) enclose the tr-type G domain. Residues 19–26 (GHVDHGKT) form a G1 region. A GTP-binding site is contributed by 19 to 26 (GHVDHGKT). Threonine 26 lines the Mg(2+) pocket. A G2 region spans residues 60 to 64 (GITIN). The segment at 81–84 (DCPG) is G3. Residues 81 to 85 (DCPGH) and 136 to 139 (NKCD) each bind GTP. Residues 136 to 139 (NKCD) form a G4 region. The segment at 174–176 (SAK) is G5.

This sequence belongs to the TRAFAC class translation factor GTPase superfamily. Classic translation factor GTPase family. EF-Tu/EF-1A subfamily. In terms of assembly, monomer.

Its subcellular location is the cytoplasm. It catalyses the reaction GTP + H2O = GDP + phosphate + H(+). In terms of biological role, GTP hydrolase that promotes the GTP-dependent binding of aminoacyl-tRNA to the A-site of ribosomes during protein biosynthesis. In Herminiimonas arsenicoxydans, this protein is Elongation factor Tu.